We begin with the raw amino-acid sequence, 308 residues long: Ribosomal protein L11 methyltransferase (308 aa).

S-adenosyl-L-methionine contacts are provided by Thr160, Gly181, Asp203, and Asn245.

Belongs to the methyltransferase superfamily. PrmA family.

It localises to the cytoplasm. The catalysed reaction is L-lysyl-[protein] + 3 S-adenosyl-L-methionine = N(6),N(6),N(6)-trimethyl-L-lysyl-[protein] + 3 S-adenosyl-L-homocysteine + 3 H(+). Functionally, methylates ribosomal protein L11. This is Ribosomal protein L11 methyltransferase from Thermoanaerobacter sp. (strain X514).